Consider the following 135-residue polypeptide: ATP synthase epsilon chain (135 aa).

The segment at 91–122 (EAQKQLSEAEQAWSKFDGQPNSPDKIKAQQAF) is disordered.

Belongs to the ATPase epsilon chain family. In terms of assembly, F-type ATPases have 2 components, CF(1) - the catalytic core - and CF(0) - the membrane proton channel. CF(1) has five subunits: alpha(3), beta(3), gamma(1), delta(1), epsilon(1). CF(0) has three main subunits: a, b and c.

The protein resides in the cellular thylakoid membrane. In terms of biological role, produces ATP from ADP in the presence of a proton gradient across the membrane. The sequence is that of ATP synthase epsilon chain from Synechococcus sp. (strain RCC307).